A 95-amino-acid polypeptide reads, in one-letter code: Small ribosomal subunit protein uS19 (95 aa).

Residues 76 to 95 are disordered; that stretch reads PTRRFGGHADKKAKKGELKK. Positions 82 to 95 are enriched in basic and acidic residues; the sequence is GHADKKAKKGELKK.

It belongs to the universal ribosomal protein uS19 family.

Protein S19 forms a complex with S13 that binds strongly to the 16S ribosomal RNA. The protein is Small ribosomal subunit protein uS19 of Thermotoga neapolitana (strain ATCC 49049 / DSM 4359 / NBRC 107923 / NS-E).